The sequence spans 341 residues: S-adenosylmethionine:tRNA ribosyltransferase-isomerase (341 aa).

Belongs to the QueA family. Monomer.

Its subcellular location is the cytoplasm. It carries out the reaction 7-aminomethyl-7-carbaguanosine(34) in tRNA + S-adenosyl-L-methionine = epoxyqueuosine(34) in tRNA + adenine + L-methionine + 2 H(+). The protein operates within tRNA modification; tRNA-queuosine biosynthesis. In terms of biological role, transfers and isomerizes the ribose moiety from AdoMet to the 7-aminomethyl group of 7-deazaguanine (preQ1-tRNA) to give epoxyqueuosine (oQ-tRNA). The sequence is that of S-adenosylmethionine:tRNA ribosyltransferase-isomerase from Thermoanaerobacter sp. (strain X514).